The primary structure comprises 147 residues: Large ribosomal subunit protein uL15 (147 aa).

Basic and acidic residues predominate over residues 1–15; the sequence is MKLHELKPAKGAVKE. The interval 1–47 is disordered; sequence MKLHELKPAKGAVKEVKRKGRGRATGNGKTAGRGHNGQNSRSGGGVR. Residues 23–35 are compositionally biased toward gly residues; that stretch reads RATGNGKTAGRGH.

The protein belongs to the universal ribosomal protein uL15 family. Part of the 50S ribosomal subunit.

In terms of biological role, binds to the 23S rRNA. The chain is Large ribosomal subunit protein uL15 from Alkaliphilus metalliredigens (strain QYMF).